We begin with the raw amino-acid sequence, 271 residues long: 4-hydroxy-tetrahydrodipicolinate reductase (271 aa).

NAD(+) is bound by residues 11-16 (GGSGRM) and Glu-37. Arg-38 contributes to the NADP(+) binding site. NAD(+) contacts are provided by residues 101–103 (GTT) and 125–128 (APNM). The active-site Proton donor/acceptor is the His-158. His-159 is a binding site for (S)-2,3,4,5-tetrahydrodipicolinate. Catalysis depends on Lys-162, which acts as the Proton donor. Residue 168-169 (GT) participates in (S)-2,3,4,5-tetrahydrodipicolinate binding.

This sequence belongs to the DapB family.

Its subcellular location is the cytoplasm. It carries out the reaction (S)-2,3,4,5-tetrahydrodipicolinate + NAD(+) + H2O = (2S,4S)-4-hydroxy-2,3,4,5-tetrahydrodipicolinate + NADH + H(+). The enzyme catalyses (S)-2,3,4,5-tetrahydrodipicolinate + NADP(+) + H2O = (2S,4S)-4-hydroxy-2,3,4,5-tetrahydrodipicolinate + NADPH + H(+). It participates in amino-acid biosynthesis; L-lysine biosynthesis via DAP pathway; (S)-tetrahydrodipicolinate from L-aspartate: step 4/4. Catalyzes the conversion of 4-hydroxy-tetrahydrodipicolinate (HTPA) to tetrahydrodipicolinate. The sequence is that of 4-hydroxy-tetrahydrodipicolinate reductase from Shewanella loihica (strain ATCC BAA-1088 / PV-4).